Reading from the N-terminus, the 914-residue chain is Protein GAMETE EXPRESSED 2 (914 aa).

2 Filamin repeats span residues 249–382 and 391–485; these read IGYC…IKEV and ACSV…DVNV. A helical transmembrane segment spans residues 893-913; sequence LVVVPFSFFSIKLFSLLMVLI.

As to expression, in tricellular pollen, expressed in mature sperm cells but not in the vegetative cell. In bicellular pollen, detected in the progenitor generative cell. Detected in the egg cell within the female gametophyte.

It localises to the cell membrane. This Arabidopsis thaliana (Mouse-ear cress) protein is Protein GAMETE EXPRESSED 2 (GEX2).